We begin with the raw amino-acid sequence, 417 residues long: Serine hydroxymethyltransferase (417 aa).

(6S)-5,6,7,8-tetrahydrofolate contacts are provided by residues Leu121 and 125–127 (GHL). At Lys229 the chain carries N6-(pyridoxal phosphate)lysine. 355 to 357 (SPF) contributes to the (6S)-5,6,7,8-tetrahydrofolate binding site.

Belongs to the SHMT family. Homodimer. Pyridoxal 5'-phosphate serves as cofactor.

The protein localises to the cytoplasm. The catalysed reaction is (6R)-5,10-methylene-5,6,7,8-tetrahydrofolate + glycine + H2O = (6S)-5,6,7,8-tetrahydrofolate + L-serine. The protein operates within one-carbon metabolism; tetrahydrofolate interconversion. Its pathway is amino-acid biosynthesis; glycine biosynthesis; glycine from L-serine: step 1/1. In terms of biological role, catalyzes the reversible interconversion of serine and glycine with tetrahydrofolate (THF) serving as the one-carbon carrier. This reaction serves as the major source of one-carbon groups required for the biosynthesis of purines, thymidylate, methionine, and other important biomolecules. Also exhibits THF-independent aldolase activity toward beta-hydroxyamino acids, producing glycine and aldehydes, via a retro-aldol mechanism. This chain is Serine hydroxymethyltransferase, found in Klebsiella pneumoniae subsp. pneumoniae (strain ATCC 700721 / MGH 78578).